A 430-amino-acid polypeptide reads, in one-letter code: Asparagine--tRNA ligase (430 aa).

The protein belongs to the class-II aminoacyl-tRNA synthetase family. As to quaternary structure, homodimer.

It is found in the cytoplasm. The enzyme catalyses tRNA(Asn) + L-asparagine + ATP = L-asparaginyl-tRNA(Asn) + AMP + diphosphate + H(+). This chain is Asparagine--tRNA ligase, found in Staphylococcus aureus (strain MW2).